A 236-amino-acid polypeptide reads, in one-letter code: tRNA1(Val) (adenine(37)-N6)-methyltransferase (236 aa).

This sequence belongs to the methyltransferase superfamily. tRNA (adenine-N(6)-)-methyltransferase family.

Its subcellular location is the cytoplasm. It catalyses the reaction adenosine(37) in tRNA1(Val) + S-adenosyl-L-methionine = N(6)-methyladenosine(37) in tRNA1(Val) + S-adenosyl-L-homocysteine + H(+). Functionally, specifically methylates the adenine in position 37 of tRNA(1)(Val) (anticodon cmo5UAC). This is tRNA1(Val) (adenine(37)-N6)-methyltransferase from Shewanella sp. (strain MR-7).